Consider the following 504-residue polypeptide: Maturase K (504 aa).

This sequence belongs to the intron maturase 2 family. MatK subfamily.

It is found in the plastid. The protein resides in the chloroplast. Usually encoded in the trnK tRNA gene intron. Probably assists in splicing its own and other chloroplast group II introns. The sequence is that of Maturase K from Quercus coccifera (Kermes oak).